A 423-amino-acid chain; its full sequence is Phosphoribosylamine--glycine ligase (423 aa).

Positions 107 to 312 (KDLCARYDIP…LLPILYATAT (206 aa)) constitute an ATP-grasp domain. Residue 133-193 (VRAQGAPIVI…EAFLDGEEAS (61 aa)) coordinates ATP. Residues E282 and N284 each contribute to the Mg(2+) site.

This sequence belongs to the GARS family. Mg(2+) is required as a cofactor. Mn(2+) serves as cofactor.

It carries out the reaction 5-phospho-beta-D-ribosylamine + glycine + ATP = N(1)-(5-phospho-beta-D-ribosyl)glycinamide + ADP + phosphate + H(+). It participates in purine metabolism; IMP biosynthesis via de novo pathway; N(1)-(5-phospho-D-ribosyl)glycinamide from 5-phospho-alpha-D-ribose 1-diphosphate: step 2/2. This is Phosphoribosylamine--glycine ligase from Agrobacterium fabrum (strain C58 / ATCC 33970) (Agrobacterium tumefaciens (strain C58)).